Here is a 356-residue protein sequence, read N- to C-terminus: Histidinol-phosphate aminotransferase (356 aa).

Lysine 214 is modified (N6-(pyridoxal phosphate)lysine).

This sequence belongs to the class-II pyridoxal-phosphate-dependent aminotransferase family. Histidinol-phosphate aminotransferase subfamily. As to quaternary structure, homodimer. Pyridoxal 5'-phosphate serves as cofactor.

The catalysed reaction is L-histidinol phosphate + 2-oxoglutarate = 3-(imidazol-4-yl)-2-oxopropyl phosphate + L-glutamate. It functions in the pathway amino-acid biosynthesis; L-histidine biosynthesis; L-histidine from 5-phospho-alpha-D-ribose 1-diphosphate: step 7/9. This is Histidinol-phosphate aminotransferase from Shigella boydii serotype 18 (strain CDC 3083-94 / BS512).